Here is a 535-residue protein sequence, read N- to C-terminus: Probable cytochrome P450 12b2, mitochondrial (535 aa).

Residue Cys-479 participates in heme binding.

This sequence belongs to the cytochrome P450 family. The cofactor is heme.

The protein localises to the mitochondrion membrane. The sequence is that of Probable cytochrome P450 12b2, mitochondrial (Cyp12b2) from Drosophila melanogaster (Fruit fly).